We begin with the raw amino-acid sequence, 580 residues long: FAD-dependent monooxygenase DEP4 (580 aa).

FAD is bound at residue 47–50 (VWSK). 58-60 (FAQ) contributes to the NADP(+) binding site. Residue valine 112 participates in FAD binding. Residues 186–205 (VGRSKSSYDAVYHLLCAGKK), 222–223 (AP), and 354–355 (DI) each bind NADP(+). Methionine 473 contacts FAD.

The protein belongs to the FAD-binding monooxygenase family. FAD is required as a cofactor.

Its pathway is polyketide biosynthesis. Part of the gene cluster that mediates the biosynthesis of depudecin, a highly oxidized eleven-carbon linear polyketide that acts as a histone deacetylase (HDAC) inhibitor and makes a small contribution to pathogenesis. The reducing polyketide synthase DEP5 is the central enzyme in depudecin biosynthesis by yielding the backbone polyketide chain. The monooxygenases DEP2 and DEP4, as well as the uncharacterized protein DEP1, then act as tailoring enzymes to modify the intermediate polyketide chain into depudecin. This is FAD-dependent monooxygenase DEP4 from Fusarium langsethiae.